The following is a 330-amino-acid chain: Succinylglutamate desuccinylase (330 aa).

The Zn(2+) site is built by H53, E56, and H147. E210 is an active-site residue.

Belongs to the AspA/AstE family. Succinylglutamate desuccinylase subfamily. Requires Zn(2+) as cofactor.

It carries out the reaction N-succinyl-L-glutamate + H2O = L-glutamate + succinate. Its pathway is amino-acid degradation; L-arginine degradation via AST pathway; L-glutamate and succinate from L-arginine: step 5/5. Its function is as follows. Transforms N(2)-succinylglutamate into succinate and glutamate. The sequence is that of Succinylglutamate desuccinylase from Yersinia enterocolitica serotype O:8 / biotype 1B (strain NCTC 13174 / 8081).